A 288-amino-acid polypeptide reads, in one-letter code: Protein sprouty homolog 3 (288 aa).

The SPR domain occupies 154–260; that stretch reads KCVPCTAARP…GYDSLRRPGC (107 aa).

It belongs to the sprouty family. In terms of assembly, interacts with TESK1. Interacts with USP11. Interacts with CAV1 (via C-terminus). As to expression, widely expressed; particularly in the fetal tissues. Expressed in the brain with expression the highest in Purkinje cells in the cerebellum (at protein level). Expressed in the myocardium of the heart.

The protein resides in the cytoplasm. In terms of biological role, inhibits neurite branching, arbor length and neurite complexity. Inhibits EGF-mediated p42/44 ERK signaling. Negatively regulates the MAPK cascade, resulting in a reduction of extracellular matrix protein accumulation. May function as an antagonist of fibroblast growth factor (FGF) pathways and may negatively modulate respiratory organogenesis. The polypeptide is Protein sprouty homolog 3 (Homo sapiens (Human)).